The sequence spans 555 residues: Cytochrome P450 monooxygenase abl2 (555 aa).

The next 2 helical transmembrane spans lie at 38-58 (SFDL…ALFI) and 141-161 (VFIG…APLA). N-linked (GlcNAc...) asparagine glycans are attached at residues asparagine 325 and asparagine 360. Cysteine 489 is a binding site for heme.

Belongs to the cytochrome P450 family. The cofactor is heme.

It is found in the membrane. Its pathway is hormone biosynthesis. In terms of biological role, cytochrome P450 monooxygenase; part of the gene cluster that mediates the biosynthesis of abscisic acid (ABA), a phytohormone that acts antagonistically toward salicylic acid (SA), jasmonic acid (JA) and ethylene (ETH) signaling, to impede plant defense responses. The first step of the pathway catalyzes the reaction from farnesyl diphosphate to alpha-ionylideneethane performed by the alpha-ionylideneethane synthase abl3 via a three-step reaction mechanism involving 2 neutral intermediates, beta-farnesene and allofarnesene. The cytochrome P450 monooxygenase abl1 might then be involved in the conversion of alpha-ionylideneethane to alpha-ionylideneacetic acid. Alpha-ionylideneacetic acid is further converted to abscisic acid in 2 steps involving the cytochrome P450 monooxygenase abl2 and the short-chain dehydrogenase/reductase abl4, via the intermediates 1'-deoxy-ABA or 1',4'-trans-diol-ABA, depending on the order of action of these 2 enzymes. Abl2 is responsible for the hydroxylation of carbon atom C-1' and abl4 might be involved in the oxidation of the C-4' carbon atom. This is Cytochrome P450 monooxygenase abl2 from Leptosphaeria maculans (strain JN3 / isolate v23.1.3 / race Av1-4-5-6-7-8) (Blackleg fungus).